We begin with the raw amino-acid sequence, 384 residues long: MGVKGLNQLIKEHSPHAYKEFELKNLFGRKVAIDASMCLYQFLIAVRQSDGQQLTNDEGETTSHLSGIFYRTIRMVENNIKPVYVFDGKPPVLKGGELEKRLLKREEAQKQIDNLKDDASVSDMTKYQKRLVRVSRDQNDEAKKLLELMGIPYVNAPCEAEAQCAELARGGKVFAAASEDMDTLCYEPPQLLRHLTFAEARKMPIDQITYKEAIQGLDMTKEQFIDLCILLGCDYCETIKGVGPVTAYKLIKEHGSLDNIVKYLQENPDKTKYKVPENWPYNEARQLFMKPEVLPALEVELKWKEPDLDGLIEYMVKNKGFSEDRIRSGAEKLKKGLKAGIQGRLDGFFTVVPKYSNTSPLGKDDKKRKTNDKKGAAAKKTKRR.

Positions 1 to 105 (MGVKGLNQLI…GELEKRLLKR (105 aa)) are N-domain. Asp-34 is a binding site for Mg(2+). Arg-47 and Arg-71 together coordinate DNA. The Mg(2+) site is built by Asp-87, Glu-159, Glu-161, Asp-180, and Asp-182. The I-domain stretch occupies residues 123-254 (DMTKYQKRLV…VTAYKLIKEH (132 aa)). Residue Glu-159 participates in DNA binding. Residues Gly-232 and Asp-234 each contribute to the DNA site. Asp-234 is a binding site for Mg(2+). An interaction with PCNA region spans residues 341-349 (IQGRLDGFF). The interval 354–384 (KYSNTSPLGKDDKKRKTNDKKGAAAKKTKRR) is disordered. A compositionally biased stretch (basic and acidic residues) spans 362-375 (GKDDKKRKTNDKKG).

This sequence belongs to the XPG/RAD2 endonuclease family. FEN1 subfamily. As to quaternary structure, interacts with PCNA. Three molecules of FEN1 bind to one PCNA trimer with each molecule binding to one PCNA monomer. PCNA stimulates the nuclease activity without altering cleavage specificity. Mg(2+) is required as a cofactor. Phosphorylated. Phosphorylation upon DNA damage induces relocalization to the nuclear plasma.

It localises to the nucleus. Its subcellular location is the nucleolus. The protein localises to the nucleoplasm. It is found in the mitochondrion. Its function is as follows. Structure-specific nuclease with 5'-flap endonuclease and 5'-3' exonuclease activities involved in DNA replication and repair. During DNA replication, cleaves the 5'-overhanging flap structure that is generated by displacement synthesis when DNA polymerase encounters the 5'-end of a downstream Okazaki fragment. It enters the flap from the 5'-end and then tracks to cleave the flap base, leaving a nick for ligation. Also involved in the long patch base excision repair (LP-BER) pathway, by cleaving within the apurinic/apyrimidinic (AP) site-terminated flap. Acts as a genome stabilization factor that prevents flaps from equilibrating into structures that lead to duplications and deletions. Also possesses 5'-3' exonuclease activity on nicked or gapped double-stranded DNA, and exhibits RNase H activity. Also involved in replication and repair of rDNA and in repairing mitochondrial DNA. This chain is Flap endonuclease 1, found in Lodderomyces elongisporus (strain ATCC 11503 / CBS 2605 / JCM 1781 / NBRC 1676 / NRRL YB-4239) (Yeast).